The chain runs to 589 residues: Transmembrane 9 superfamily member 5 (589 aa).

Residues 1-24 form the signal peptide; sequence MAQFLLTVLQVLLALTFWIGIGSG. Over 25-227 the chain is Lumenal; the sequence is SSNHYNAGDH…SFHPISQKIH (203 aa). Residues 228-248 traverse the membrane as a helical segment; the sequence is FFSFLNSITVVVLLIGLISFL. Residues 249-291 lie on the Cytoplasmic side of the membrane; the sequence is FMRHLKNELRSYSIGDEEERKEAGWKLVHSDVFRCPRNISWLC. A helical transmembrane segment spans residues 292 to 312; the sequence is AILGTGTQLLILIIALFALAF. The Lumenal portion of the chain corresponds to 313-321; that stretch reads TGFLYPYNR. A helical membrane pass occupies residues 322 to 342; the sequence is GMLLTSLVIMYTLTSIVAGYT. The Cytoplasmic portion of the chain corresponds to 343–361; that stretch reads STSFHSQFEGNKQKRSVRL. A helical membrane pass occupies residues 362 to 382; it reads AGILYPVPFFIILSVLNTVAI. Topologically, residues 383–394 are lumenal; it reads TYGATAALPFGT. A helical membrane pass occupies residues 395–415; sequence IVIIILIFTLLNIPFLMLGGV. Over 416-450 the chain is Cytoplasmic; that stretch reads LGNRFGLLEFQPPSAVKRNPREIPPQNWYRRKLYQ. A helical transmembrane segment spans residues 451-471; the sequence is VFLGGFVPFSAVVLEWHQLYA. Residues 472-482 lie on the Lumenal side of the membrane; that stretch reads SLWGFKIYTSP. A helical transmembrane segment spans residues 483-503; the sequence is GIMLFTFIVLIFLSSSVGIIL. Residues 504–518 are Cytoplasmic-facing; it reads TYIQLSGEDHEWWWR. Residues 519-539 traverse the membrane as a helical segment; that stretch reads SILCGGFTAVFMYGYGVLFYL. Residues 540 to 550 are Lumenal-facing; sequence RSDMTGFLQLS. Residues 551–571 traverse the membrane as a helical segment; that stretch reads FYLGYTALLCYALFLVLGTIS. The Cytoplasmic segment spans residues 572 to 589; that stretch reads FLASLMFIRHIYRSVKLE. The Endoplasmic reticulum export signal motif lies at 578–583; sequence FIRHIY. The short motif at 587–589 is the Golgi retention signal element; it reads KLE.

The protein belongs to the nonaspanin (TM9SF) (TC 9.A.2) family. Expressed in the root cap and in giant cells.

The protein localises to the endosome membrane. It localises to the golgi apparatus membrane. The protein is Transmembrane 9 superfamily member 5 of Arabidopsis thaliana (Mouse-ear cress).